The following is a 173-amino-acid chain: MDLKQYITQVKDWPKPGVNFKDITTIMDNGAAYKYATDQIVEYAKEKQVDIVVGPEARGFIIGCPVAYAMNIGFAPVRKKGKLPREVISYEYELEYGTNVLTMHKDAIKPGQRVLITDDLLATGGTIEATIKLVESLGGIVAGIAFIIDLKYLNGMEKLKGYDVISLVEYEVE.

The protein belongs to the purine/pyrimidine phosphoribosyltransferase family. In terms of assembly, homodimer.

It localises to the cytoplasm. The catalysed reaction is AMP + diphosphate = 5-phospho-alpha-D-ribose 1-diphosphate + adenine. It functions in the pathway purine metabolism; AMP biosynthesis via salvage pathway; AMP from adenine: step 1/1. Catalyzes a salvage reaction resulting in the formation of AMP, that is energically less costly than de novo synthesis. The polypeptide is Adenine phosphoribosyltransferase (Macrococcus caseolyticus (strain JCSC5402) (Macrococcoides caseolyticum)).